The primary structure comprises 530 residues: Na(+)/H(+) antiporter NhaB (530 aa).

13 helical membrane passes run 13–33 (FLGK…IINP), 34–54 (FVFF…EFIF), 64–84 (PLQP…TSPA), 90–110 (LVAN…IYFM), 113–133 (LLLY…LLSL), 136–156 (CLMA…AVVI), 205–225 (LLMH…VGEP), 234–254 (AGWL…PVFM), 306–326 (ALIA…VGLI), 351–371 (EEAL…AVII), 378–400 (PIIS…IANG), 450–470 (ATPN…APLI), and 481–501 (ALPY…FMLL).

It belongs to the NhaB Na(+)/H(+) (TC 2.A.34) antiporter family.

The protein resides in the cell inner membrane. The enzyme catalyses 2 Na(+)(in) + 3 H(+)(out) = 2 Na(+)(out) + 3 H(+)(in). Na(+)/H(+) antiporter that extrudes sodium in exchange for external protons. The sequence is that of Na(+)/H(+) antiporter NhaB from Photobacterium profundum (strain SS9).